The primary structure comprises 156 residues: Small ribosomal subunit protein uS7 (156 aa).

The protein belongs to the universal ribosomal protein uS7 family. In terms of assembly, part of the 30S ribosomal subunit. Contacts proteins S9 and S11.

In terms of biological role, one of the primary rRNA binding proteins, it binds directly to 16S rRNA where it nucleates assembly of the head domain of the 30S subunit. Is located at the subunit interface close to the decoding center, probably blocks exit of the E-site tRNA. In Acidobacterium capsulatum (strain ATCC 51196 / DSM 11244 / BCRC 80197 / JCM 7670 / NBRC 15755 / NCIMB 13165 / 161), this protein is Small ribosomal subunit protein uS7.